A 122-amino-acid chain; its full sequence is uncharacterized protein (122 aa).

Residues 1–35 form the signal peptide; sequence MCCYVGKATKIFLCLAAALIVVGLVLGFGLAHRTW. The segment at 55–83 is disordered; it reads YGGGGGGGDPLPATSGAGDTPPGVPLTEP.

This is an uncharacterized protein from Oryza sativa subsp. japonica (Rice).